The chain runs to 299 residues: Cancer/testis antigen family 47 member B1 (299 aa).

Residues 1–10 (MSATGDRHPT) show a composition bias toward basic and acidic residues. Disordered stretches follow at residues 1-102 (MSAT…EGNE) and 215-299 (AREP…SKGT). 2 stretches are compositionally biased toward low complexity: residues 20 to 31 (QEGAQAEAAGAG) and 46 to 60 (VPAAEVVGVAGPVEG). A compositionally biased stretch (acidic residues) spans 81 to 101 (AEEDSDIGPATEEEEEEEEGN). A compositionally biased stretch (basic and acidic residues) spans 215–238 (AREPAEEAADEKPPEEAAEEKLTE). 2 stretches are compositionally biased toward acidic residues: residues 239–251 (EATEEPAAEEPTS) and 268–281 (WDEEAQDAAGEEEK). The stretch at 270–298 (EEAQDAAGEEEKEQEKEKDVENKVKNSKG) forms a coiled coil. Residues 282–293 (EQEKEKDVENKV) are compositionally biased toward basic and acidic residues.

Belongs to the CT47 family.

This is Cancer/testis antigen family 47 member B1 from Homo sapiens (Human).